The sequence spans 297 residues: ATP synthase subunit gamma, mitochondrial (297 aa).

It belongs to the ATPase gamma chain family. In terms of assembly, F-type ATPases have 2 components, CF(1) - the catalytic core - and CF(0) - the membrane proton channel. CF(1) has five subunits: alpha(3), beta(3), gamma(1), delta(1), epsilon(1). CF(0) has three main subunits: a, b and c.

The protein localises to the mitochondrion. The protein resides in the mitochondrion inner membrane. In terms of biological role, mitochondrial membrane ATP synthase (F(1)F(0) ATP synthase or Complex V) produces ATP from ADP in the presence of a proton gradient across the membrane which is generated by electron transport complexes of the respiratory chain. F-type ATPases consist of two structural domains, F(1) - containing the extramembraneous catalytic core, and F(0) - containing the membrane proton channel, linked together by a central stalk and a peripheral stalk. During catalysis, ATP synthesis in the catalytic domain of F(1) is coupled via a rotary mechanism of the central stalk subunits to proton translocation. Part of the complex F(1) domain and the central stalk which is part of the complex rotary element. The gamma subunit protrudes into the catalytic domain formed of alpha(3)beta(3). Rotation of the central stalk against the surrounding alpha(3)beta(3) subunits leads to hydrolysis of ATP in three separate catalytic sites on the beta subunits. The protein is ATP synthase subunit gamma, mitochondrial of Drosophila melanogaster (Fruit fly).